The chain runs to 85 residues: Small ribosomal subunit protein uS17 (85 aa).

Belongs to the universal ribosomal protein uS17 family. Part of the 30S ribosomal subunit.

In terms of biological role, one of the primary rRNA binding proteins, it binds specifically to the 5'-end of 16S ribosomal RNA. This is Small ribosomal subunit protein uS17 from Mycoplasma pneumoniae (strain ATCC 29342 / M129 / Subtype 1) (Mycoplasmoides pneumoniae).